A 294-amino-acid polypeptide reads, in one-letter code: Sperm acrosome membrane-associated protein 1 (294 aa).

Positions 1-29 are cleaved as a signal peptide; sequence MSPRGTGCSAGLLMTVGWLLLAGLQSARG. At 30–221 the chain is on the extracellular side; the sequence is TNVTAAVQDA…LPATDAALIF (192 aa). The N-linked (GlcNAc...) asparagine glycan is linked to Asn31. A disordered region spans residues 42 to 70; sequence AHEGEGEEETENNDSETAENYAPPETEDV. Acidic residues predominate over residues 46–58; sequence EGEEETENNDSET. The helical transmembrane segment at 222–242 threads the bilayer; it reads VLTIGVIICVFIIFLLIFIII. The Cytoplasmic portion of the chain corresponds to 243–294; the sequence is NWAAVKAFWGAKASTPEVQSEQSSVRYKDSTSLDQLPTEMPGEDDALSEWNE. Ser256 carries the phosphoserine modification. Polar residues predominate over residues 258–267; sequence PEVQSEQSSV. Residues 258 to 294 are disordered; it reads PEVQSEQSSVRYKDSTSLDQLPTEMPGEDDALSEWNE. Residue Tyr269 is modified to Phosphotyrosine. Positions 283 to 294 are enriched in acidic residues; sequence PGEDDALSEWNE. Ser290 carries the phosphoserine modification.

In terms of assembly, interacts with CYLC1; the interaction may be relevant for proper acrosome attachment to the nuclear envelope. N-glycosylated. Testis specific.

It localises to the cytoplasmic vesicle. The protein resides in the secretory vesicle. Its subcellular location is the acrosome inner membrane. Functionally, plays a role in acrosome formation and establishment of normal sperm morphology during spermatogenesis. Important for male fertility. The sequence is that of Sperm acrosome membrane-associated protein 1 (SPACA1) from Homo sapiens (Human).